The chain runs to 640 residues: RAP domain-containing protein, chloroplastic (640 aa).

A chloroplast-targeting transit peptide spans 1–32 (MEAALLRPPPLAARGGVSIAIAFSVSRLPSAA). A disordered region spans residues 111 to 158 (SLQRMVASPKKKNKKKKSKKTNLKQKKAAEPKPPRDTDDDEDDEEEAD). Positions 119 to 136 (PKKKNKKKKSKKTNLKQK) are enriched in basic residues. Basic and acidic residues predominate over residues 137 to 146 (KAAEPKPPRD). A compositionally biased stretch (acidic residues) spans 147-158 (TDDDEDDEEEAD). The RAP domain maps to 575-633 (LAFEIDGPSHFSRNLGTPLGHTAFKRRYIAAAGWNLVSLSHQEWENLEGEFEQLEYLRR).

In terms of tissue distribution, expressed in roots, leaf sheaths, veins of leaf blade, mature leaves, endodermis of culm, panicles and anthers.

Its subcellular location is the plastid. It is found in the chloroplast. Probable RNA-binding protein that plays an essential role in chloroplast development. Regulates the ribosomal proteins homeostasis and ribosomal RNA development in chloroplasts. Involved the regulation of 16S rRNA and required for the expression of chloroplast-associated photosynthetic genes. This Oryza sativa subsp. japonica (Rice) protein is RAP domain-containing protein, chloroplastic.